The sequence spans 524 residues: Cytochrome P450 monooxygenase ATR4 (524 aa).

Residues 13–36 (IITYLDSLTWVGMALPLFSLCWAI) form a helical membrane-spanning segment. N-linked (GlcNAc...) asparagine glycans are attached at residues Asn-291, Asn-444, and Asn-454.

Belongs to the cytochrome P450 family. Heme is required as a cofactor.

The protein localises to the membrane. It participates in mycotoxin biosynthesis. Cytochrome P450 monooxygenase; part of the core atranone cluster (CAC) which products are predicted to catalyze most or all steps of mycotoxin atranone synthesis, starting from geranylgeranyl pyrophosphate (GGPP). The initial cyclization of GGPP to dolabellane is probably performed by the terpene cyclase ATR13. The Baeyer-Villiger oxidation near the end of the atranone synthesis, which converts atranones D and E to atranones F and G is predicted to be catalyzed by the monooxygenase ATR8. Of the CAC's other predicted gene products, the reducing PKS ATR6 might synthesize a polyketide chain. This polyketide is probably transferred onto the atranone backbone by the polyketide transferase ATR5. Other predicted CAC products include 4 oxygenases (ATR2, ATR3, ATR4, and ATR14), 3 short-chain reductases (ATR7, ATR9, and ATR10), and a methyltransferase (ATR12). These may all be involved in the various steps of atranone biosynthesis, although their specific roles must await experimental determination. The sequence is that of Cytochrome P450 monooxygenase ATR4 from Stachybotrys chlorohalonatus (strain IBT 40285).